The sequence spans 328 residues: 6-phosphogluconolactonase (328 aa).

It belongs to the cycloisomerase 2 family.

It carries out the reaction 6-phospho-D-glucono-1,5-lactone + H2O = 6-phospho-D-gluconate + H(+). It functions in the pathway carbohydrate degradation; pentose phosphate pathway; D-ribulose 5-phosphate from D-glucose 6-phosphate (oxidative stage): step 2/3. Catalyzes the hydrolysis of 6-phosphogluconolactone to 6-phosphogluconate. The chain is 6-phosphogluconolactonase from Photorhabdus laumondii subsp. laumondii (strain DSM 15139 / CIP 105565 / TT01) (Photorhabdus luminescens subsp. laumondii).